Reading from the N-terminus, the 294-residue chain is Chelated iron transport system membrane protein YfeC (294 aa).

8 consecutive transmembrane segments (helical) span residues 17–37 (AIWV…YLML), 51–71 (VVPG…GAFF), 93–113 (AIIG…VSLN), 140–160 (IIIL…LAVF), 169–189 (IGLS…ACTV), 194–214 (TVGA…AYLL), 221–241 (LLII…YLSF), and 246–266 (ATGG…FFFA).

The protein belongs to the ABC-3 integral membrane protein family.

It is found in the cell inner membrane. Part of an ATP-driven transport system YfeABC for chelated iron. This Yersinia pestis protein is Chelated iron transport system membrane protein YfeC (yfeC).